A 418-amino-acid polypeptide reads, in one-letter code: Serine hydroxymethyltransferase (418 aa).

(6S)-5,6,7,8-tetrahydrofolate-binding positions include L120 and 124–126; that span reads GHL. K229 is modified (N6-(pyridoxal phosphate)lysine). 353-355 lines the (6S)-5,6,7,8-tetrahydrofolate pocket; it reads SPF.

It belongs to the SHMT family. As to quaternary structure, homodimer. It depends on pyridoxal 5'-phosphate as a cofactor.

The protein localises to the cytoplasm. The enzyme catalyses (6R)-5,10-methylene-5,6,7,8-tetrahydrofolate + glycine + H2O = (6S)-5,6,7,8-tetrahydrofolate + L-serine. It functions in the pathway one-carbon metabolism; tetrahydrofolate interconversion. The protein operates within amino-acid biosynthesis; glycine biosynthesis; glycine from L-serine: step 1/1. Functionally, catalyzes the reversible interconversion of serine and glycine with tetrahydrofolate (THF) serving as the one-carbon carrier. This reaction serves as the major source of one-carbon groups required for the biosynthesis of purines, thymidylate, methionine, and other important biomolecules. Also exhibits THF-independent aldolase activity toward beta-hydroxyamino acids, producing glycine and aldehydes, via a retro-aldol mechanism. This is Serine hydroxymethyltransferase from Psychrobacter arcticus (strain DSM 17307 / VKM B-2377 / 273-4).